A 299-amino-acid chain; its full sequence is Taste receptor type 2 member 45 (299 aa).

Residue Met-1 is a topological domain, extracellular. Residues 2 to 22 (ITFLPIIFSILVVVTFVIGNF) traverse the membrane as a helical segment. Topologically, residues 23-55 (ANGFIALVNSTEWVKRQKISFADQIVTALAVSR) are cytoplasmic. The chain crosses the membrane as a helical span at residues 56–76 (VGLLWVLLLNWYSTVLNPAFC). The Extracellular portion of the chain corresponds to 77–98 (SVELRTTAYNIWAVTGHFSNWP). Residues 99-119 (ATSLSIFYLLKIANFSNLIFL) form a helical membrane-spanning segment. At 120 to 126 (RLKRRVK) the chain is on the cytoplasmic side. A helical membrane pass occupies residues 127–147 (SVILVVLLGPLLFLACHLFVV). Residues 148–178 (NMNQIVWTKEYEGNMTWKIKLRRAMYLSDTT) lie on the Extracellular side of the membrane. N-linked (GlcNAc...) asparagine glycosylation occurs at Asn-161. Residues 179-199 (VTMLANLVPFTVTLISFLLLV) traverse the membrane as a helical segment. Residues 200–229 (CSLCKHLKKMQLHGKGSQDPSTKVHIKVLQ) lie on the Cytoplasmic side of the membrane. The helical transmembrane segment at 230 to 250 (TVISFFLLRAIYFVSVIISVW) threads the bilayer. At 251-259 (SFKNLENKP) the chain is on the extracellular side. The helical transmembrane segment at 260-280 (VFMFCQAIGFSCSSAHPFILI) threads the bilayer. Over 281 to 299 (WGNKKLKQTYLSVLWQMRY) the chain is Cytoplasmic.

It belongs to the G-protein coupled receptor T2R family. Expressed in subsets of taste receptor cells of the tongue and exclusively in gustducin-positive cells.

Its subcellular location is the membrane. Receptor that may play a role in the perception of bitterness and is gustducin-linked. May play a role in sensing the chemical composition of the gastrointestinal content. The activity of this receptor may stimulate alpha gustducin, mediate PLC-beta-2 activation and lead to the gating of TRPM5. The sequence is that of Taste receptor type 2 member 45 (TAS2R45) from Homo sapiens (Human).